A 553-amino-acid polypeptide reads, in one-letter code: MAFPELLDRVGGLGRFQLFQTVALVTPILWVTTQNMLENFSAAVPHHRCWVPLLDNSTSQASIPGDLGPDVLLAVSIPPGPDQQPHQCLRFRQPQWQLTESNATATNWSDAATEPCEDGWVYDHSTFRSTIVTTWDLVCNSQALRPMAQSIFLAGILVGAAVCGHASDRFGRRRVLTWSYLLVSVSGTAAAFMPTFPLYCLFRFLLASAVAGVMMNTASLLMEWTSAQGSPLVMTLNALGFSFGQVLTGSVAYGVRSWRMLQLAVSAPFFLFFVYSWWLPESARWLITVGKLDQGLQELQRVAAVNRRKAEGDTLTMEVLRSAMEEEPSRDKAGASLGTLLHTPGLRHRTIISMLCWFAFGFTFYGLALDLQALGSNIFLLQALIGIVDFPVKTGSLLLISRLGRRFCQVSFLVLPGLCILSNILVPHGMGVLRSALAVLGLGCLGGAFTCITIFSSELFPTVIRMTAVGLCQVAARGGAMLGPLVRLLGVYGSWMPLLVYGVVPVLSGLAALLLPETKNLPLPDTIQDIQKQSVKKVTHDTPDGSILMSTRL.

Residues 10 to 30 form a helical membrane-spanning segment; sequence VGGLGRFQLFQTVALVTPILW. Asn56 is a glycosylation site (N-linked (GlcNAc...) asparagine). 11 helical membrane passes run 146-166, 182-202, 204-224, 232-252, 260-280, 351-371, 378-398, 412-432, 435-455, 466-486, and 495-515; these read PMAQ…CGHA, LVSV…YCLF, FLLA…LMEW, LVMT…GSVA, MLQL…WWLP, IISM…ALDL, IFLL…GSLL, FLVL…GMGV, SALA…ITIF, MTAV…GPLV, and WMPL…ALLL. Ser534 carries the phosphoserine modification. Thr542 carries the phosphothreonine modification.

It belongs to the major facilitator (TC 2.A.1) superfamily. Organic cation transporter (TC 2.A.1.19) family. Interacts with PDZK1. Post-translationally, N-glycosylated. In terms of tissue distribution, detected in kidney (at protein level). Detected in kidney cortex, in proximal tubules.

The protein resides in the apical cell membrane. The enzyme catalyses urate(out) + (S)-lactate(in) = urate(in) + (S)-lactate(out). It carries out the reaction nicotinate(in) + urate(out) = nicotinate(out) + urate(in). The catalysed reaction is urate(out) + n chloride(in) = urate(in) + n chloride(out). It catalyses the reaction orotate(out) + nicotinate(in) = orotate(in) + nicotinate(out). Electroneutral antiporter that translocates urate across the apical membrane of proximal tubular cells in exchange for monovalent organic or inorganic anions. Involved in renal reabsorption of urate and helps maintaining blood levels of uric acid. Mediates urate uptake by an exchange with organic anions such as (S)-lactate and nicotinate, and inorganic anion Cl(-). Other inorganic anions such as Br(-), I(-) and NO3(-) may also act as counteranions that exchange for urate. Also mediates orotate tubular uptake coupled with nicotinate efflux and to a lesser extent with lactate efflux, therefore displaying a potential role in orotate renal reabsorption. Orotate transport is Cl(-)-dependent. The chain is Solute carrier family 22 member 12 from Mus musculus (Mouse).